The following is a 408-amino-acid chain: GTPase Obg (408 aa).

Residues 1–159 form the Obg domain; that stretch reads MKFFDEARIE…RNLHLELKVL (159 aa). The 175-residue stretch at 160 to 334 folds into the OBG-type G domain; that stretch reads ADVGLLGMPN…LIFALQDFLD (175 aa). GTP-binding positions include 166–173, 191–195, 213–216, 284–287, and 315–317; these read GMPNAGKS, FTTLQ, DIPG, NKLD, and SAL. Mg(2+) contacts are provided by Ser173 and Thr193. Positions 385–408 are disordered; sequence AEDALAEDALDDDADGEDADPNAR.

Belongs to the TRAFAC class OBG-HflX-like GTPase superfamily. OBG GTPase family. As to quaternary structure, monomer. It depends on Mg(2+) as a cofactor.

The protein localises to the cytoplasm. Functionally, an essential GTPase which binds GTP, GDP and possibly (p)ppGpp with moderate affinity, with high nucleotide exchange rates and a fairly low GTP hydrolysis rate. Plays a role in control of the cell cycle, stress response, ribosome biogenesis and in those bacteria that undergo differentiation, in morphogenesis control. This is GTPase Obg from Azoarcus sp. (strain BH72).